Here is a 250-residue protein sequence, read N- to C-terminus: 2,3-bisphosphoglycerate-dependent phosphoglycerate mutase (250 aa).

Residues 10–17 (RHGESQWN), 23–24 (TG), arginine 62, 89–92 (ERHY), lysine 100, 116–117 (RR), and 185–186 (GN) contribute to the substrate site. The Tele-phosphohistidine intermediate role is filled by histidine 11. Residue glutamate 89 is the Proton donor/acceptor of the active site.

Belongs to the phosphoglycerate mutase family. BPG-dependent PGAM subfamily. Homodimer.

It catalyses the reaction (2R)-2-phosphoglycerate = (2R)-3-phosphoglycerate. It participates in carbohydrate degradation; glycolysis; pyruvate from D-glyceraldehyde 3-phosphate: step 3/5. Its function is as follows. Catalyzes the interconversion of 2-phosphoglycerate and 3-phosphoglycerate. In Yersinia pseudotuberculosis serotype IB (strain PB1/+), this protein is 2,3-bisphosphoglycerate-dependent phosphoglycerate mutase.